A 493-amino-acid polypeptide reads, in one-letter code: Neisserial heparin binding antigen (493 aa).

The N-terminal stretch at 1-22 (MKEMMMFKRSVIAMACIFALSA) is a signal peptide. Cys-23 carries N-palmitoyl cysteine lipidation. Cys-23 is lipidated: S-diacylglycerol cysteine. A disordered region spans residues 27-206 (GGGSPDVKSA…NPAPANGGSN (180 aa)). The span at 48-58 (SEKETEAKEDA) shows a compositional bias: basic and acidic residues. A compositionally biased stretch (low complexity) spans 59-75 (PQAGSQGQGAPSAQGSQ). Composition is skewed to polar residues over residues 106–123 (DMPQ…NHTP) and 132–147 (MENQ…QPAN). Positions 165–188 (AGGQNAGNTAAQGANQAGNNQAAG) are enriched in low complexity. An Arg-rich motif motif is present at residues 301–311 (RFRRSARSRRS).

Belongs to the NHBA family. The C-terminal beta-barrel forms a monomer. In terms of processing, cleaved in vivo by the Neisserial phase-variable autotransporter/serine protease NalP to give 2 fragments. The N-terminus remains in the cell outer membrane while the C-terminus (beginning on Ser-298) is soluble; this soluble fragment is called C2. Cleaved in vitro by human lactoferrin (LTF, between Arg-310 and Ser-311), this fragment is called C1. Recombinant and cell surface protein is cleaved by human saliva kallikrein (KLK1) between Ser-308 and Arg-309; in saliva kallikrein is more active on NHBA than lactoferrin. Human plasma kallikrein (KLKB1) cleaves in a similar manner to KLK1.

It is found in the cell outer membrane. Its function is as follows. A major human immunogenic protein detected in patients recovering from meningitidis, where it induces bactericidal antibodies. Binds human cells, heparin and heparan sulfate proteoglycan in vitro via the Arg-rich motif. Heparin-binding to this protein protects bacteria against killing by bactericidal antibodies (serum killing). The bacteria binds a number of human extracellular sialyated and/or sulfated glycans via this protein, including chondroitin sulfate, heparin and ganglioside GT3. Whole protein binds DNA. Functionally, plays a role in extracellular-DNA (eDNA) mediated biofilm formation. In some strains (including cc32 strain H44/76 but not cc11 strain B16B6) eDNA stimulates biofilm formation. When NHBA is not processed by NalP, biofilm formation increases. This is probably because the number of positively charged, NHBA- and IgA-derived DNA-binding peptides on the cell surface rises, resulting in increased DNA-binding peptides and increased biofilm formation. The polypeptide is Neisserial heparin binding antigen (Neisseria meningitidis serogroup B / serotype 15 (strain H44/76)).